Consider the following 308-residue polypeptide: Olfactory receptor 5H8 (308 aa).

The Extracellular portion of the chain corresponds to 1-28; it reads MDDENATLLTEFVLTGLTYQSEWKIPLF. Residues 29–49 traverse the membrane as a helical segment; sequence LAFLVIYLITIMANLGLIAVI. Residues 50 to 56 are Cytoplasmic-facing; that stretch reads WKDSHLH. The helical transmembrane segment at 57–77 threads the bilayer; sequence IPMYLFLGSLAFVDAWLSSSV. At 78–98 the chain is on the extracellular side; sequence TPKMLISFLAKSMIISVSECK. A disulfide bridge links cysteine 97 with cysteine 179. A helical membrane pass occupies residues 99 to 119; sequence IQFFSFGISGTTECFLLATMA. Residues 120 to 133 lie on the Cytoplasmic side of the membrane; sequence YDRYVAICKPLLYP. Residues 134-154 form a helical membrane-spanning segment; it reads VIMTNGLCIWLLVLSFIGGFL. The Extracellular portion of the chain corresponds to 155-195; the sequence is HALIHEGILFRLTFCNSNIIHHFYCDIIPLLKISCTDPSIN. A helical transmembrane segment spans residues 196–216; sequence FLMLFILSGSIQVFTILTVLV. At 217-238 the chain is on the cytoplasmic side; the sequence is SYTFVLFTILKKKAKDIRKAFS. A helical transmembrane segment spans residues 239 to 259; it reads TCGAHLLSVSLYYGPLLFMYV. The Extracellular portion of the chain corresponds to 260-270; the sequence is HPASPQADDQD. Residues 271–291 form a helical membrane-spanning segment; the sequence is MVESLFYTVIIPFLNPIIYSL. Topologically, residues 292 to 308 are cytoplasmic; the sequence is RNKQVIDSLTKTLKGNV.

This sequence belongs to the G-protein coupled receptor 1 family.

The protein resides in the cell membrane. Odorant receptor. The polypeptide is Olfactory receptor 5H8 (Homo sapiens (Human)).